The following is a 247-amino-acid chain: NAD(P)H-quinone oxidoreductase subunit K (247 aa).

[4Fe-4S] cluster is bound by residues cysteine 63, cysteine 64, cysteine 128, and cysteine 159.

Belongs to the complex I 20 kDa subunit family. In terms of assembly, NDH-1 can be composed of about 15 different subunits; different subcomplexes with different compositions have been identified which probably have different functions. [4Fe-4S] cluster serves as cofactor.

It localises to the cellular thylakoid membrane. The enzyme catalyses a plastoquinone + NADH + (n+1) H(+)(in) = a plastoquinol + NAD(+) + n H(+)(out). It carries out the reaction a plastoquinone + NADPH + (n+1) H(+)(in) = a plastoquinol + NADP(+) + n H(+)(out). Its function is as follows. NDH-1 shuttles electrons from an unknown electron donor, via FMN and iron-sulfur (Fe-S) centers, to quinones in the respiratory and/or the photosynthetic chain. The immediate electron acceptor for the enzyme in this species is believed to be plastoquinone. Couples the redox reaction to proton translocation, and thus conserves the redox energy in a proton gradient. Cyanobacterial NDH-1 also plays a role in inorganic carbon-concentration. The protein is NAD(P)H-quinone oxidoreductase subunit K of Microcystis aeruginosa (strain NIES-843 / IAM M-2473).